The following is a 132-amino-acid chain: Agouti-signaling protein (132 aa).

Positions 1 to 22 (MDVTRLLLATLLVFLCFFTVYS) are cleaved as a signal peptide. A glycan (N-linked (GlcNAc...) asparagine) is linked at asparagine 39. The interval 61–87 (HISRKEAEKKRSSKKEASMKKVARPRT) is disordered. The segment covering 64–79 (RKEAEKKRSSKKEASM) has biased composition (basic and acidic residues). 5 disulfide bridges follow: cysteine 93–cysteine 108, cysteine 100–cysteine 114, cysteine 107–cysteine 125, cysteine 111–cysteine 132, and cysteine 116–cysteine 123. In terms of domain architecture, Agouti spans 93–132 (CVATRDSCKPPAPACCDPCASCQCRFFRSACSCRVLSLNC).

The protein localises to the secreted. Functionally, involved in the regulation of melanogenesis. The binding of ASP to MC1R precludes alpha-MSH initiated signaling and thus blocks production of cAMP, leading to a down-regulation of eumelanogenesis (brown/black pigment) and thus increasing synthesis of pheomelanin (yellow/red pigment). This is Agouti-signaling protein (ASIP) from Colobus polykomos (Western black-and-white colobus monkey).